We begin with the raw amino-acid sequence, 124 residues long: ATP synthase epsilon chain (124 aa).

This sequence belongs to the ATPase epsilon chain family. F-type ATPases have 2 components, CF(1) - the catalytic core - and CF(0) - the membrane proton channel. CF(1) has five subunits: alpha(3), beta(3), gamma(1), delta(1), epsilon(1). CF(0) has three main subunits: a, b and c.

The protein resides in the cell membrane. Its function is as follows. Produces ATP from ADP in the presence of a proton gradient across the membrane. This is ATP synthase epsilon chain from Streptomyces griseus subsp. griseus (strain JCM 4626 / CBS 651.72 / NBRC 13350 / KCC S-0626 / ISP 5235).